An 81-amino-acid chain; its full sequence is MKYPLVPLVNELTFSFLASWLCLPVGLLLFLLIVWLRFLLSQDSEENDSDLCFDWEPWSKGPAEFCQEETLHSPEEERPCW.

A helical transmembrane segment spans residues 16–36; it reads FLASWLCLPVGLLLFLLIVWL.

This sequence belongs to the adipogenin family.

It is found in the membrane. The protein localises to the nucleus. In terms of biological role, plays a role in stimulating adipocyte differentiation and development. The protein is Adipogenin of Sus scrofa (Pig).